The primary structure comprises 297 residues: uncharacterized protein (297 aa).

The next 9 helical transmembrane spans lie at 1 to 21 (MSWI…LGII), 32 to 52 (GSIL…IYVY), 72 to 92 (AMAL…NIPS), 98 to 118 (VLFF…YGGI), 120 to 140 (LIHK…ATGI), 194 to 214 (ILIE…IFAI), 218 to 238 (VYII…LFFC), 253 to 273 (LALI…IEIP), and 274 to 294 (AYIS…ASIL).

This sequence belongs to the TerC family.

It localises to the cell membrane. This is an uncharacterized protein from Rickettsia prowazekii (strain Madrid E).